A 237-amino-acid polypeptide reads, in one-letter code: Intracellular ribonuclease LX (237 aa).

The propeptide occupies 1-24 (MMKSQKKLLIKIIVVQCLLVLCVT). RNA is bound at residue Gln-36. Cys-42 and Cys-48 are disulfide-bonded. RNA contacts are provided by residues His-63, Phe-113, 116 to 117 (HE), and 120 to 121 (KH). His-63 serves as the catalytic Proton donor. Cystine bridges form between Cys-78-Cys-124, Cys-183-Cys-219, and Cys-199-Cys-210. Residue Glu-117 is part of the active site. His-121 serves as the catalytic Proton acceptor.

The protein belongs to the RNase T2 family.

It is found in the cytoplasm. The catalysed reaction is a ribonucleotidyl-ribonucleotide-RNA + H2O = a 3'-end 3'-phospho-ribonucleotide-RNA + a 5'-end dephospho-ribonucleoside-RNA + H(+). The polypeptide is Intracellular ribonuclease LX (RNALX) (Solanum lycopersicum (Tomato)).